The sequence spans 916 residues: Isoleucine--tRNA ligase (916 aa).

The 'HIGH' region motif lies at 58–68 (PYANGHLHIGH). An L-isoleucyl-5'-AMP-binding site is contributed by glutamate 568. The short motif at 609–613 (KMSKS) is the 'KMSKS' region element. Lysine 612 is a binding site for ATP. Positions 891, 894, 906, and 909 each coordinate Zn(2+).

The protein belongs to the class-I aminoacyl-tRNA synthetase family. IleS type 1 subfamily. As to quaternary structure, monomer. The cofactor is Zn(2+).

The protein resides in the cytoplasm. The enzyme catalyses tRNA(Ile) + L-isoleucine + ATP = L-isoleucyl-tRNA(Ile) + AMP + diphosphate. Catalyzes the attachment of isoleucine to tRNA(Ile). As IleRS can inadvertently accommodate and process structurally similar amino acids such as valine, to avoid such errors it has two additional distinct tRNA(Ile)-dependent editing activities. One activity is designated as 'pretransfer' editing and involves the hydrolysis of activated Val-AMP. The other activity is designated 'posttransfer' editing and involves deacylation of mischarged Val-tRNA(Ile). The polypeptide is Isoleucine--tRNA ligase (Campylobacter fetus subsp. fetus (strain 82-40)).